A 391-amino-acid polypeptide reads, in one-letter code: MQTVYGIKAHGGKLVNLEDFSEATRQAAEQLPSLTINNWNISDLELIGIGGFSPLTGFMVSDDYHSVVNTMHLKSGVIWSVPITLGVSQADADKIELNTKIALKGADGVIYGTMQVEDKFVPDKQLEAQNVYKTTDEAHPGVKRLYANGDVYLGGAIKLLHKPDHGAFSDYYMEPLETRKMFHDLGWKRIVGFQTRNPIHRAHEYIQKLALENVDGLFLNPLVGETKADDIPADVRMESYKTILKYYYPEDRVRLVIYPAAMRYAGPKEAILHAIVRKNYGCTDFIVGRDHAGVGDYYGTYEAQELITSVEDEMGMHFFKFDNSFYCKKCGSMATQKTCPHGAEDHISLSGTKVRKMLADGVVPPKEVSRPEVARVLIDGLKRKREQQQEV.

It belongs to the sulfate adenylyltransferase family.

It carries out the reaction sulfate + ATP + H(+) = adenosine 5'-phosphosulfate + diphosphate. The protein operates within sulfur metabolism; hydrogen sulfide biosynthesis; sulfite from sulfate: step 1/3. The sequence is that of Sulfate adenylyltransferase from Lactiplantibacillus plantarum (strain ATCC BAA-793 / NCIMB 8826 / WCFS1) (Lactobacillus plantarum).